A 62-amino-acid chain; its full sequence is uncharacterized protein (62 aa).

Helical transmembrane passes span leucine 7 to alanine 27 and isoleucine 34 to leucine 51.

Its subcellular location is the cell membrane. This is an uncharacterized protein from Bacillus subtilis (strain 168).